A 464-amino-acid polypeptide reads, in one-letter code: Protein FAM90A16 (464 aa).

Disordered stretches follow at residues 1–42 (MMAR…DPRL), 70–389 (PATL…HDGA), and 415–437 (HSPE…SEAP). Basic and acidic residues-rich tracts occupy residues 74-89 (GKKE…KPRV) and 97-114 (NKDK…DPQR). Residues 180–197 (LASLSPLRKASLSSSSSL) show a composition bias toward low complexity.

It belongs to the FAM90 family.

This Homo sapiens (Human) protein is Protein FAM90A16.